The sequence spans 227 residues: MAYPLQLGLQDATSPIMEELTSFHDHTLMIVFLISSLVLYIISSMLTTKMTHTNTMDAQGVETIWTILPAAILVLIALPSLRILYMMDEINNPALTVKTMGHQWYWSYEYTDYEDLYFDSYMTPTSDLKPGELRLLEVDNRVVLPMELPIRMLISSEDVLHSWAVPSLGLKTDAIPGRLNQATISSNRPGLFYGQCSEICGSNHSFMPIVLEMVPLKHFENWSASMI.

Residues 1-14 are Mitochondrial intermembrane-facing; the sequence is MAYPLQLGLQDATS. Residues 15–45 form a helical membrane-spanning segment; that stretch reads PIMEELTSFHDHTLMIVFLISSLVLYIISSM. Over 46-59 the chain is Mitochondrial matrix; it reads LTTKMTHTNTMDAQ. Residues 60–87 traverse the membrane as a helical segment; it reads GVETIWTILPAAILVLIALPSLRILYMM. At 88–227 the chain is on the mitochondrial intermembrane side; that stretch reads DEINNPALTV…HFENWSASMI (140 aa). Cu cation-binding residues include His-161, Cys-196, Glu-198, Cys-200, His-204, and Met-207. Residue Glu-198 coordinates Mg(2+).

Belongs to the cytochrome c oxidase subunit 2 family. As to quaternary structure, component of the cytochrome c oxidase (complex IV, CIV), a multisubunit enzyme composed of 14 subunits. The complex is composed of a catalytic core of 3 subunits MT-CO1, MT-CO2 and MT-CO3, encoded in the mitochondrial DNA, and 11 supernumerary subunits COX4I, COX5A, COX5B, COX6A, COX6B, COX6C, COX7A, COX7B, COX7C, COX8 and NDUFA4, which are encoded in the nuclear genome. The complex exists as a monomer or a dimer and forms supercomplexes (SCs) in the inner mitochondrial membrane with NADH-ubiquinone oxidoreductase (complex I, CI) and ubiquinol-cytochrome c oxidoreductase (cytochrome b-c1 complex, complex III, CIII), resulting in different assemblies (supercomplex SCI(1)III(2)IV(1) and megacomplex MCI(2)III(2)IV(2)). Found in a complex with TMEM177, COA6, COX18, COX20, SCO1 and SCO2. Interacts with TMEM177 in a COX20-dependent manner. Interacts with COX20. Interacts with COX16. Cu cation serves as cofactor.

It localises to the mitochondrion inner membrane. The enzyme catalyses 4 Fe(II)-[cytochrome c] + O2 + 8 H(+)(in) = 4 Fe(III)-[cytochrome c] + 2 H2O + 4 H(+)(out). Component of the cytochrome c oxidase, the last enzyme in the mitochondrial electron transport chain which drives oxidative phosphorylation. The respiratory chain contains 3 multisubunit complexes succinate dehydrogenase (complex II, CII), ubiquinol-cytochrome c oxidoreductase (cytochrome b-c1 complex, complex III, CIII) and cytochrome c oxidase (complex IV, CIV), that cooperate to transfer electrons derived from NADH and succinate to molecular oxygen, creating an electrochemical gradient over the inner membrane that drives transmembrane transport and the ATP synthase. Cytochrome c oxidase is the component of the respiratory chain that catalyzes the reduction of oxygen to water. Electrons originating from reduced cytochrome c in the intermembrane space (IMS) are transferred via the dinuclear copper A center (CU(A)) of subunit 2 and heme A of subunit 1 to the active site in subunit 1, a binuclear center (BNC) formed by heme A3 and copper B (CU(B)). The BNC reduces molecular oxygen to 2 water molecules using 4 electrons from cytochrome c in the IMS and 4 protons from the mitochondrial matrix. The chain is Cytochrome c oxidase subunit 2 (MT-CO2) from Acomys ignitus (Fiery spiny mouse).